The chain runs to 347 residues: Ribosomal RNA small subunit methyltransferase H (347 aa).

Residues 50–52 (GGH), Asp69, Phe96, Asp125, and Gln132 each bind S-adenosyl-L-methionine.

The protein belongs to the methyltransferase superfamily. RsmH family.

Its subcellular location is the cytoplasm. The enzyme catalyses cytidine(1402) in 16S rRNA + S-adenosyl-L-methionine = N(4)-methylcytidine(1402) in 16S rRNA + S-adenosyl-L-homocysteine + H(+). Functionally, specifically methylates the N4 position of cytidine in position 1402 (C1402) of 16S rRNA. This chain is Ribosomal RNA small subunit methyltransferase H, found in Corynebacterium aurimucosum (strain ATCC 700975 / DSM 44827 / CIP 107346 / CN-1) (Corynebacterium nigricans).